Reading from the N-terminus, the 475-residue chain is Aspartyl/glutamyl-tRNA(Asn/Gln) amidotransferase subunit B (475 aa).

It belongs to the GatB/GatE family. GatB subfamily. In terms of assembly, heterotrimer of A, B and C subunits.

It catalyses the reaction L-glutamyl-tRNA(Gln) + L-glutamine + ATP + H2O = L-glutaminyl-tRNA(Gln) + L-glutamate + ADP + phosphate + H(+). The enzyme catalyses L-aspartyl-tRNA(Asn) + L-glutamine + ATP + H2O = L-asparaginyl-tRNA(Asn) + L-glutamate + ADP + phosphate + 2 H(+). Functionally, allows the formation of correctly charged Asn-tRNA(Asn) or Gln-tRNA(Gln) through the transamidation of misacylated Asp-tRNA(Asn) or Glu-tRNA(Gln) in organisms which lack either or both of asparaginyl-tRNA or glutaminyl-tRNA synthetases. The reaction takes place in the presence of glutamine and ATP through an activated phospho-Asp-tRNA(Asn) or phospho-Glu-tRNA(Gln). This chain is Aspartyl/glutamyl-tRNA(Asn/Gln) amidotransferase subunit B, found in Staphylococcus carnosus (strain TM300).